Consider the following 886-residue polypeptide: MTTSPSSSADLLPKSWDPGAMESVIYQKWLNSGYFAADPASTKPGYSIVLPPPNVTGSLHMGHALEHTMMDALTRRKRMQGYEVLWQPGMDHAGIATQSVVEKQLAINGKIKEDFGRELFVDKVWDWKRESGGAIAGQMRRLGDGVDWSRDRFTMDDGLSRAVRMIFKRLYDAGLIYRAERLVNWSPVLRTALSDIEVIYDEIEGELISFRYGSLDDDEPHIVVATTRVETMLGDTGIAVHPDDKRYQHLVGTTLPHPFIDRELVIVADEHVDPEFGTGAVKVTPAHDPNDFEIGLRHNLPMPNVMDVKAVIVDTGTEFDGMDRFEARIAVREALAVQGRIVEEKRPYRHSVGHSERSGEVIEPRLSLQWWVRVESLAKAAGDAVRNGDTVIHPASMESRWFAWVDDMRDWCISRQLWWGHRIPIWYGPNGEQVCVGPDETPPEGWQQDPDVLDTWFSSALWPFSTLGWPQMTPELEKFYPTSILVTGYDILFFWVARMMMLGTFVGGDDAITLGGCRGPQVPFTDVFLHGLIRDEFGRKMSKSRGNVIDPLAWMDMFGADALRFTLARGSSPGGDLAIGEDHVRASRNFGTKLFNATRYALLNGAALVPLPALTALTDADRWILGRLEQVRAEVDSAFDGYEFSRACEALYHFAWDEFCDWYLELAKAQLADGLTHTTAVLAAALDTLLRLLHPVMPFITETLWQALTQLESLVIATWPEPSGISLDLVAAQRISDMQKLVTEIRRFRSDQGLVDRQKVPARLSGVEDSDLATQVGFVTSLALLTAASNDFRPSALLEVRLGPNKDRAVVVELDTSGTIDVAAERRRMEKDLAAAQKELASTAAKLANADFLAKAPEAVVVKIRDRQRMAKEETDRIIARLAGLQ.

A 'HIGH' region motif is present at residues 53 to 63 (PNVTGSLHMGH). The 'KMSKS' region motif lies at 540–544 (KMSKS). K543 lines the ATP pocket. Residues 820-851 (IDVAAERRRMEKDLAAAQKELASTAAKLANAD) adopt a coiled-coil conformation.

It belongs to the class-I aminoacyl-tRNA synthetase family. ValS type 1 subfamily. As to quaternary structure, monomer.

The protein localises to the cytoplasm. It catalyses the reaction tRNA(Val) + L-valine + ATP = L-valyl-tRNA(Val) + AMP + diphosphate. In terms of biological role, catalyzes the attachment of valine to tRNA(Val). As ValRS can inadvertently accommodate and process structurally similar amino acids such as threonine, to avoid such errors, it has a 'posttransfer' editing activity that hydrolyzes mischarged Thr-tRNA(Val) in a tRNA-dependent manner. This chain is Valine--tRNA ligase, found in Mycobacterium leprae (strain TN).